Consider the following 81-residue polypeptide: Salivary thrombin inhibitor anophelin (81 aa).

A signal peptide spans 1–22 (MANKLFLISLLCVVLVAKIAQA). Asparagine 45 carries N-linked (GlcNAc...) asparagine glycosylation. The blocks active site cleft of host thrombin in a reverse direction compared to substrates stretch occupies residues 70–73 (DPGR).

The protein belongs to the anophelin family. As to quaternary structure, interacts with human F2 (thrombin); the interaction results in thrombin inhibition.

It localises to the secreted. Salivary protein with anticoagulant activity that inhibits host thrombin (F2). This Anopheles darlingi (Mosquito) protein is Salivary thrombin inhibitor anophelin.